The following is a 91-amino-acid chain: CLAVATA3/ESR (CLE)-related protein 27 (91 aa).

Positions 1 to 35 (MTHAREWRSSLTTTLLMVILLSYMLHLFCVYSRVG) are cleaved as a signal peptide. 2 positions are modified to hydroxyproline: P83 and P86. O-linked (Ara...) hydroxyproline glycosylation is present at P86.

Belongs to the CLV3/ESR signal peptide family. In terms of processing, the O-glycosylation (arabinosylation) of the hydroxyproline Pro-86 enhances binding affinity of the CLE27p peptide for its receptor. Mostly expressed in apex, and, to a lower extent, in roots, leaves, flowers and siliques.

The protein localises to the secreted. It localises to the extracellular space. Functionally, extracellular signal peptide that regulates cell fate. Represses root apical meristem maintenance. In Arabidopsis thaliana (Mouse-ear cress), this protein is CLAVATA3/ESR (CLE)-related protein 27.